A 442-amino-acid chain; its full sequence is 3-dehydroquinate synthase, chloroplastic (442 aa).

The N-terminal 58 residues, 1 to 58 (MAANTISLSNVAASKNLNSFQSRAFIAPPTIFFPVASAKSKPGELSLSSTTLSRSRVR), are a transit peptide targeting the chloroplast. The residue at position 59 (A59) is an N-acetylalanine. Residues N119, 150 to 152 (DGE), K155, 183 to 188 (GGVIGD), 208 to 209 (TT), K221, K230, and 248 to 251 (TLNT) each bind NAD(+). Position 263 (E263) interacts with a divalent metal cation. Residue K305 coordinates NAD(+). Positions 326 and 343 each coordinate a divalent metal cation.

Belongs to the sugar phosphate cyclases superfamily. Dehydroquinate synthase family. As to quaternary structure, homodimer. The cofactor is a divalent metal cation. It depends on NAD(+) as a cofactor.

It is found in the plastid. The protein resides in the chloroplast. It catalyses the reaction 7-phospho-2-dehydro-3-deoxy-D-arabino-heptonate = 3-dehydroquinate + phosphate. The protein operates within metabolic intermediate biosynthesis; chorismate biosynthesis; chorismate from D-erythrose 4-phosphate and phosphoenolpyruvate: step 2/7. Its function is as follows. Catalyzes the second step in the shikimate pathway. This chain is 3-dehydroquinate synthase, chloroplastic (DHQS), found in Arabidopsis thaliana (Mouse-ear cress).